Here is a 360-residue protein sequence, read N- to C-terminus: Protein phosphatase 1 regulatory subunit 7 (360 aa).

Residues 1 to 65 (MAAERGAGQQ…DEDPEEGQEL (65 aa)) form a disordered region. Ala2 carries the post-translational modification N-acetylalanine. Phosphoserine is present on residues Ser12, Ser24, Ser27, Ser44, and Ser47. The segment covering 17–34 (EVDRRVESEESGDEEGKK) has biased composition (basic and acidic residues). Residues 53-63 (ERGDEDPEEGQ) are compositionally biased toward acidic residues. 11 LRR repeats span residues 77–98 (DAED…EVLK), 99–120 (KVKT…EGLQ), 121–142 (SLRE…DALT), 143–164 (ELEV…DKLT), 165–186 (RLKK…SSLH), 187–208 (QLQM…DTLT), 209–230 (NLES…DALT), 231–252 (NLTV…QSLV), 253–274 (NLRE…DNNN), 275–296 (KLTM…SHLT), and 297–318 (ELQE…DELK). Ser322 carries the phosphoserine modification. Residues 331 to 360 (NPLQRDPQYRRKIMLALPSVRQIDATFVRF) enclose the LRRCT domain.

Belongs to the SDS22 family. As to quaternary structure, interacts with PPP1CA, PPP1CB and PPP1CC/PPP1G. Interacts with PPP1CC isoform 2 in motile caudal epididymal spermatozoa. Expressed in epididymal spermatozoa including the principal piece of the flagellum and the head-neck junction.

The protein localises to the nucleus. In terms of biological role, regulatory subunit of protein phosphatase 1. Inactivates the PPP1CC isoform 2 during epididymal sperm maturation. This chain is Protein phosphatase 1 regulatory subunit 7 (PPP1R7), found in Bos taurus (Bovine).